A 216-amino-acid polypeptide reads, in one-letter code: Probable phosphatase SPAC513.02 (216 aa).

His15 acts as the Tele-phosphohistidine intermediate in catalysis.

The protein belongs to the phosphoglycerate mutase family. BPG-dependent PGAM subfamily.

It is found in the cytoplasm. The protein localises to the nucleus. This chain is Probable phosphatase SPAC513.02, found in Schizosaccharomyces pombe (strain 972 / ATCC 24843) (Fission yeast).